A 727-amino-acid chain; its full sequence is Pre-B-cell leukemia transcription factor-interacting protein 1 (727 aa).

Residues 1 to 10 (MASCPDSDNS) show a composition bias toward polar residues. The tract at residues 1–169 (MASCPDSDNS…GREPSSSQPV (169 aa)) is disordered. Ser-131, Ser-142, Ser-143, and Ser-144 each carry phosphoserine. Thr-148 carries the phosphothreonine modification. Ser-164 bears the Phosphoserine mark. Coiled coils occupy residues 270–350 (FLLD…RGVD) and 377–405 (DPSL…WQLL). A compositionally biased stretch (polar residues) spans 446 to 456 (QGINTGRSPND). 2 disordered regions span residues 446–565 (QGIN…NSPD) and 694–727 (LKKR…YHQG). Residues 473–563 (WGGKEKWRGG…QKHSWGKDNS (91 aa)) show a composition bias toward basic and acidic residues. The Nuclear localization signal motif lies at 486-506 (QKAEHWKPRKEESGQERQRSW). Ser-563 carries the post-translational modification Phosphoserine. The Nuclear localization signal signature appears at 691–716 (DKALKKRSRKKEKHSWNPRVVGPREE). The segment covering 694-703 (LKKRSRKKEK) has biased composition (basic residues).

Interacts with ESR1, PBX1, PBX2 and PBX3. Interacts with TEX11.

Its subcellular location is the cytoplasm. The protein resides in the cytoskeleton. The protein localises to the nucleus. Regulator of pre-B-cell leukemia transcription factors (BPXs) function. Inhibits the binding of PBX1-HOX complex to DNA and blocks the transcriptional activity of E2A-PBX1. Tethers estrogen receptor-alpha (ESR1) to microtubules and allows them to influence estrogen receptors-alpha signaling. In Mus musculus (Mouse), this protein is Pre-B-cell leukemia transcription factor-interacting protein 1 (Pbxip1).